Consider the following 157-residue polypeptide: Ribonuclease 8 (157 aa).

A signal peptide spans 1 to 30 (MAPARAGCCPLLLLLLLLLGLWVAEVLVSA). His45 serves as the catalytic Proton acceptor. 4 cysteine pairs are disulfide-bonded: Cys53–Cys96, Cys67–Cys121, Cys85–Cys136, and Cys92–Cys99. Residues 68 to 72 (KDLNT) and Lys93 each bind substrate. Catalysis depends on His152, which acts as the Proton donor.

Belongs to the pancreatic ribonuclease family.

The protein localises to the secreted. Its function is as follows. Has a low ribonuclease activity. In Pan troglodytes (Chimpanzee), this protein is Ribonuclease 8 (RNASE8).